We begin with the raw amino-acid sequence, 391 residues long: MYVRHLQVTDFRSWPHADLTFEPGPTVLVGSNGQGKTNLVEALGYVATLGSHRVATDAPLVRYGTQRAVVRAAVVNHGRELLVELEITPGKANRARINRGAAGKPRDVLGILRTVLFAPEDMAMVRGDPGERRRFLDDLLVARAPRYAGVRSDYDRVLRQRSALLKSAGAAKRGGSGGDLRTLEVWDGHLARYGAELLAGRLDLVAAIAPHVTSAYANVAATAEETAPSGRVADVRYRSSLGESLPEGYGVPRGEPADVEVLEKALLAELERVRAQELERGVSLVGPHRDDLELMLGELPAKGYASHGESWSFALALRLASYHLLAEDGAEPVLILDDVFAELDRRRRSRLAELVAGAEQVLVTAAVAEDVPEELTGVRFDVREGEVRRVE.

30–37 (GSNGQGKT) contacts ATP.

It belongs to the RecF family.

It localises to the cytoplasm. The RecF protein is involved in DNA metabolism; it is required for DNA replication and normal SOS inducibility. RecF binds preferentially to single-stranded, linear DNA. It also seems to bind ATP. In Saccharopolyspora erythraea (strain ATCC 11635 / DSM 40517 / JCM 4748 / NBRC 13426 / NCIMB 8594 / NRRL 2338), this protein is DNA replication and repair protein RecF.